A 103-amino-acid polypeptide reads, in one-letter code: Large ribosomal subunit protein bL21 (103 aa).

This sequence belongs to the bacterial ribosomal protein bL21 family. In terms of assembly, part of the 50S ribosomal subunit. Contacts protein L20.

Its function is as follows. This protein binds to 23S rRNA in the presence of protein L20. This Shewanella piezotolerans (strain WP3 / JCM 13877) protein is Large ribosomal subunit protein bL21.